A 115-amino-acid chain; its full sequence is Beta-2-microglobulin (115 aa).

A signal peptide spans 1 to 18 (MGLLICSLLLGLLCCSMA). Residues 23 to 114 (PKVEVYTREP…KSKDHFLMIG (92 aa)) form the Ig-like C1-type domain.

This sequence belongs to the beta-2-microglobulin family. In terms of assembly, heterodimer of an alpha chain and a beta chain. Beta-2-microglobulin is the beta-chain of major histocompatibility complex class I molecules.

Its subcellular location is the secreted. Its function is as follows. Component of the class I major histocompatibility complex (MHC). Involved in the presentation of peptide antigens to the immune system. The protein is Beta-2-microglobulin (b2m) of Paralichthys olivaceus (Bastard halibut).